The chain runs to 105 residues: Cuticle protein AM1159 (105 aa).

Residues 16-81 form the Chitin-binding type R&amp;R domain; sequence DGNFNYNFQT…PESPLLPVGP (66 aa). The segment at 25-46 is disordered; sequence TSNGIEDTKTGTPGSQGQSNMQ.

Arthrodial membrane.

This is Cuticle protein AM1159 from Cancer pagurus (Rock crab).